The primary structure comprises 181 residues: Small ribosomal subunit protein uS4 (181 aa).

Residues 108–177 enclose the S4 RNA-binding domain; that stretch reads RRLQTMVYRQ…EGHPEIERIN (70 aa). The interval 161 to 181 is disordered; the sequence is GTSPLTSEGHPEIERINKKRR. The segment covering 169-181 has biased composition (basic and acidic residues); that stretch reads GHPEIERINKKRR.

It belongs to the universal ribosomal protein uS4 family. In terms of assembly, part of the 30S ribosomal subunit. Contacts protein S5. The interaction surface between S4 and S5 is involved in control of translational fidelity.

Its function is as follows. One of the primary rRNA binding proteins, it binds directly to 16S rRNA where it nucleates assembly of the body of the 30S subunit. With S5 and S12 plays an important role in translational accuracy. The sequence is that of Small ribosomal subunit protein uS4 from Methanosphaerula palustris (strain ATCC BAA-1556 / DSM 19958 / E1-9c).